Reading from the N-terminus, the 149-residue chain is Lipoprotein MlpF (149 aa).

A signal peptide spans 1 to 17; it reads MKIINILFCLFLLLLNS. Cysteine 18 carries the N-palmitoyl cysteine lipid modification. The S-diacylglycerol cysteine moiety is linked to residue cysteine 18. The interval 26-58 is disordered; it reads LKNNAQQTKSRGKRDLTQKEATPEKPKSKEELL. The segment covering 38-58 has biased composition (basic and acidic residues); sequence KRDLTQKEATPEKPKSKEELL.

The protein belongs to the Multicopy lipoprotein (Mlp) family.

The protein resides in the cell outer membrane. Its function is as follows. An outer membrane protein that may participate in pathogenesis. Some human Lyme disease patients have antibodies against this protein. The Mlp proteins probably undergo intragenic recombination, generating new alleles. The protein is Lipoprotein MlpF of Borreliella burgdorferi (strain ATCC 35210 / DSM 4680 / CIP 102532 / B31) (Borrelia burgdorferi).